The primary structure comprises 175 residues: Acetyl-CoA decarbonylase/synthase complex subunit epsilon 2 (175 aa).

Belongs to the CdhB family. In terms of assembly, heterotetramer of two alpha and two epsilon subunits. The ACDS complex is made up of alpha, epsilon, beta, gamma and delta subunits with a probable stoichiometry of (alpha(2)epsilon(2))(4)-beta(8)-(gamma(1)delta(1))(8).

Part of a complex that catalyzes the reversible cleavage of acetyl-CoA, allowing autotrophic growth from CO(2). The alpha-epsilon subcomponent functions as a carbon monoxide dehydrogenase. The precise role of the epsilon subunit is unclear; it may have a stabilizing role within the alpha(2)epsilon(2) component and/or be involved in electron transfer to FAD during a potential FAD-mediated CO oxidation. This is Acetyl-CoA decarbonylase/synthase complex subunit epsilon 2 (cdhB2) from Archaeoglobus fulgidus (strain ATCC 49558 / DSM 4304 / JCM 9628 / NBRC 100126 / VC-16).